The chain runs to 317 residues: Proline iminopeptidase (317 aa).

An AB hydrolase-1 domain is found at 41-296 (VFIHGGPGGG…ELHIVEGAGH (256 aa)). The active-site Nucleophile is the Ser-113. The active site involves Asp-268. The Proton donor role is filled by His-296.

This sequence belongs to the peptidase S33 family. Monomer.

The protein resides in the cytoplasm. The enzyme catalyses Release of N-terminal proline from a peptide.. Functionally, specifically catalyzes the removal of N-terminal proline residues from peptides. The protein is Proline iminopeptidase (pip) of Serratia marcescens.